The sequence spans 152 residues: D-aminoacyl-tRNA deacylase (152 aa).

Positions 142 to 143 (GP) match the Gly-cisPro motif, important for rejection of L-amino acids motif.

It belongs to the DTD family. In terms of assembly, homodimer.

It localises to the cytoplasm. It carries out the reaction glycyl-tRNA(Ala) + H2O = tRNA(Ala) + glycine + H(+). The enzyme catalyses a D-aminoacyl-tRNA + H2O = a tRNA + a D-alpha-amino acid + H(+). Functionally, an aminoacyl-tRNA editing enzyme that deacylates mischarged D-aminoacyl-tRNAs. Also deacylates mischarged glycyl-tRNA(Ala), protecting cells against glycine mischarging by AlaRS. Acts via tRNA-based rather than protein-based catalysis; rejects L-amino acids rather than detecting D-amino acids in the active site. By recycling D-aminoacyl-tRNA to D-amino acids and free tRNA molecules, this enzyme counteracts the toxicity associated with the formation of D-aminoacyl-tRNA entities in vivo and helps enforce protein L-homochirality. The sequence is that of D-aminoacyl-tRNA deacylase from Paraburkholderia xenovorans (strain LB400).